The sequence spans 525 residues: uncharacterized protein (525 aa).

2 consecutive transmembrane segments (helical) span residues 28-48 (FIDVHVANISVAAFLTPNLII) and 353-373 (GVNALLAAIGAEIGANILFTP). The Pterin-binding domain maps to 146–394 (DIKIGKLKVG…ELKIASKMMF (249 aa)).

It localises to the cell membrane. Functionally, unknown. Does not possess dihydropteroate synthase (DHPS) activity since it does not catalyze the condensation of 6-hydroxymethyl-7,8-dihydropterin pyrophosphate (DHPP) and 4-aminobenzoate to form 7,8-dihydropteroate. This is an uncharacterized protein from Methanocaldococcus jannaschii (strain ATCC 43067 / DSM 2661 / JAL-1 / JCM 10045 / NBRC 100440) (Methanococcus jannaschii).